A 131-amino-acid polypeptide reads, in one-letter code: Photosystem II extrinsic protein U (131 aa).

The N-terminal stretch at 1–28 (MKFISRLLVACSLLIGLMGFLGADLAQA) is a signal peptide. The propeptide occupies 29–36 (LTPNPILA).

It belongs to the PsbU family. PSII is composed of 1 copy each of membrane proteins PsbA, PsbB, PsbC, PsbD, PsbE, PsbF, PsbH, PsbI, PsbJ, PsbK, PsbL, PsbM, PsbT, PsbX, PsbY, PsbZ, Psb30/Ycf12, peripheral proteins PsbO, CyanoQ (PsbQ), PsbU, PsbV and a large number of cofactors. It forms dimeric complexes.

It is found in the cellular thylakoid membrane. Its function is as follows. One of the extrinsic, lumenal subunits of photosystem II (PSII). PSII is a light-driven water plastoquinone oxidoreductase, using light energy to abstract electrons from H(2)O, generating a proton gradient subsequently used for ATP formation. The extrinsic proteins stabilize the structure of photosystem II oxygen-evolving complex (OEC), the ion environment of oxygen evolution and protect the OEC against heat-induced inactivation. May modulate the Cl(-) requirement for oxygen evolution. The protein is Photosystem II extrinsic protein U of Synechocystis sp. (strain ATCC 27184 / PCC 6803 / Kazusa).